Reading from the N-terminus, the 525-residue chain is Eukaryotic translation initiation factor 3 subunit L (525 aa).

Acidic residues predominate over residues 1 to 19; that stretch reads MYTQADEYDGGDAGYEDDY. The disordered stretch occupies residues 1 to 21; sequence MYTQADEYDGGDAGYEDDYSG. Positions 296–502 constitute a PCI domain; sequence DAIRCFSSVL…IHIADTKVDR (207 aa).

The protein belongs to the eIF-3 subunit L family. As to quaternary structure, component of the eukaryotic translation initiation factor 3 (eIF-3) complex.

It is found in the cytoplasm. Component of the eukaryotic translation initiation factor 3 (eIF-3) complex, which is involved in protein synthesis of a specialized repertoire of mRNAs and, together with other initiation factors, stimulates binding of mRNA and methionyl-tRNAi to the 40S ribosome. The eIF-3 complex specifically targets and initiates translation of a subset of mRNAs involved in cell proliferation. The protein is Eukaryotic translation initiation factor 3 subunit L of Nematostella vectensis (Starlet sea anemone).